A 625-amino-acid chain; its full sequence is tRNA uridine 5-carboxymethylaminomethyl modification enzyme MnmG (625 aa).

FAD-binding positions include 13–18, V125, and S182; that span reads GGGHAG. Residue 276 to 290 participates in NAD(+) binding; the sequence is GPRYCPSIEDKITRF. Q373 is an FAD binding site.

It belongs to the MnmG family. In terms of assembly, homodimer. Heterotetramer of two MnmE and two MnmG subunits. It depends on FAD as a cofactor.

It localises to the cytoplasm. In terms of biological role, NAD-binding protein involved in the addition of a carboxymethylaminomethyl (cmnm) group at the wobble position (U34) of certain tRNAs, forming tRNA-cmnm(5)s(2)U34. The protein is tRNA uridine 5-carboxymethylaminomethyl modification enzyme MnmG of Lactococcus lactis subsp. lactis (strain IL1403) (Streptococcus lactis).